The sequence spans 299 residues: Epimerase family protein SH2119 (299 aa).

This sequence belongs to the NAD(P)-dependent epimerase/dehydratase family. SDR39U1 subfamily.

This is Epimerase family protein SH2119 from Staphylococcus haemolyticus (strain JCSC1435).